The primary structure comprises 384 residues: Cytochrome b (384 aa).

4 helical membrane-spanning segments follow: residues 32–52 (FGSL…FLSM), 75–96 (FLLR…YFHI), 111–131 (WRVG…GYVL), and 176–196 (FFSL…VHLI). Heme b is bound by residues H81 and H95. 2 residues coordinate heme b: H180 and H194. H199 contacts a ubiquinone. 4 helical membrane passes run 224–244 (SKDW…VYLM), 286–306 (FGGV…PLLH), 318–338 (FGRM…WIGS), and 345–366 (FIII…LIPL).

This sequence belongs to the cytochrome b family. The main subunits of complex b-c1 are: cytochrome b, cytochrome c1 and the Rieske protein. The cofactor is heme b.

The protein localises to the mitochondrion inner membrane. Component of the ubiquinol-cytochrome c reductase complex (complex III or cytochrome b-c1 complex) that is part of the mitochondrial respiratory chain. The b-c1 complex mediates electron transfer from ubiquinol to cytochrome c. Contributes to the generation of a proton gradient across the mitochondrial membrane that is then used for ATP synthesis. In Acropora tenuis (Purple tipped acropora), this protein is Cytochrome b (MT-CYB).